A 228-amino-acid chain; its full sequence is 5'-methylthioadenosine/S-adenosylhomocysteine nucleosidase (228 aa).

E11 functions as the Proton acceptor in the catalytic mechanism. Substrate contacts are provided by residues G77, I151, and 172–173; that span reads ME. D196 serves as the catalytic Proton donor.

It belongs to the PNP/UDP phosphorylase family. MtnN subfamily.

It carries out the reaction S-adenosyl-L-homocysteine + H2O = S-(5-deoxy-D-ribos-5-yl)-L-homocysteine + adenine. The catalysed reaction is S-methyl-5'-thioadenosine + H2O = 5-(methylsulfanyl)-D-ribose + adenine. It catalyses the reaction 5'-deoxyadenosine + H2O = 5-deoxy-D-ribose + adenine. It functions in the pathway amino-acid biosynthesis; L-methionine biosynthesis via salvage pathway; S-methyl-5-thio-alpha-D-ribose 1-phosphate from S-methyl-5'-thioadenosine (hydrolase route): step 1/2. Its function is as follows. Catalyzes the irreversible cleavage of the glycosidic bond in both 5'-methylthioadenosine (MTA) and S-adenosylhomocysteine (SAH/AdoHcy) to adenine and the corresponding thioribose, 5'-methylthioribose and S-ribosylhomocysteine, respectively. Also cleaves 5'-deoxyadenosine, a toxic by-product of radical S-adenosylmethionine (SAM) enzymes, into 5-deoxyribose and adenine. This chain is 5'-methylthioadenosine/S-adenosylhomocysteine nucleosidase, found in Staphylococcus aureus (strain JH1).